Consider the following 808-residue polypeptide: Probable inorganic carbon transporter subunit DabA (808 aa).

Residues Cys334, Asp336, His494, and Cys509 each contribute to the Zn(2+) site.

The protein belongs to the inorganic carbon transporter (TC 9.A.2) DabA family. As to quaternary structure, forms a complex with DabB. The cofactor is Zn(2+).

It is found in the cell inner membrane. Its function is as follows. Part of an energy-coupled inorganic carbon pump. This is Probable inorganic carbon transporter subunit DabA from Rhodopseudomonas palustris (strain BisB5).